The primary structure comprises 435 residues: NADH-quinone oxidoreductase subunit D (435 aa).

It belongs to the complex I 49 kDa subunit family. NDH-1 is composed of 14 different subunits. Subunits NuoB, C, D, E, F, and G constitute the peripheral sector of the complex.

Its subcellular location is the cell membrane. The catalysed reaction is a quinone + NADH + 5 H(+)(in) = a quinol + NAD(+) + 4 H(+)(out). NDH-1 shuttles electrons from NADH, via FMN and iron-sulfur (Fe-S) centers, to quinones in the respiratory chain. The immediate electron acceptor for the enzyme in this species is believed to be ubiquinone. Couples the redox reaction to proton translocation (for every two electrons transferred, four hydrogen ions are translocated across the cytoplasmic membrane), and thus conserves the redox energy in a proton gradient. This chain is NADH-quinone oxidoreductase subunit D, found in Stenotrophomonas maltophilia (strain K279a).